The sequence spans 240 residues: Ribosomal RNA small subunit methyltransferase G (240 aa).

Residues glycine 79, 130–131 (AE), and arginine 149 each bind S-adenosyl-L-methionine.

Belongs to the methyltransferase superfamily. RNA methyltransferase RsmG family.

It is found in the cytoplasm. Its function is as follows. Specifically methylates the N7 position of a guanine in 16S rRNA. This chain is Ribosomal RNA small subunit methyltransferase G, found in Moorella thermoacetica (strain ATCC 39073 / JCM 9320).